A 504-amino-acid chain; its full sequence is MVSIRPDEISSILKQQIADYDKSVSVSNVGTVLQIGDGIARVYGLEKVMAGELVEFEDGTEGIALNLEDDNVGVVLMGEALGVQEGSTVKATGKIASVPVGEAMLGRVVNPLGQQIDGKGEIATTDTRLIESIAPGIIKRKSVHEPMQTGITSIDAMIPIGRGQRELIIGDRQTGKTAIAIDTIINQKGQDVVCVYVAVGQKQASVANVVEVLKEKGALDYTIIVNAGASEAAALQYLAPYTGAAIAEHFMYQGKATLVIYDDLTKQAQAYRQMSLLLRRPLGREAYPGDVFYCHSRLLERAAKLSDAMGAGSMTSLPIIETQAGDVSAYIPTNVISITDGQIFLSSDLFNSGLRPAINVGISVSRVGGAAQTKAIKKIAGTLKLELAQFDELAAFSQFASDLDEATQKQLGRGKRLRELLKQPQFDPLNLAEQVAIVYAGVKGLIDEVPEEKVVNFARELRDYLKTNKADFLKNVLSEKVLSEASESMLKDAISEVKSSMLAA.

Residue 170–177 (GDRQTGKT) participates in ATP binding.

Belongs to the ATPase alpha/beta chains family. As to quaternary structure, F-type ATPases have 2 components, CF(1) - the catalytic core - and CF(0) - the membrane proton channel. CF(1) has five subunits: alpha(3), beta(3), gamma(1), delta(1), epsilon(1). CF(0) has four main subunits: a(1), b(1), b'(1) and c(9-12).

Its subcellular location is the cellular thylakoid membrane. The catalysed reaction is ATP + H2O + 4 H(+)(in) = ADP + phosphate + 5 H(+)(out). Produces ATP from ADP in the presence of a proton gradient across the membrane. The alpha chain is a regulatory subunit. The polypeptide is ATP synthase subunit alpha (Prochlorococcus marinus (strain NATL1A)).